The primary structure comprises 677 residues: Sulfate transporter 2.2 (677 aa).

Over 1 to 110 the chain is Cytoplasmic; sequence MQLSSLSHTS…QYKLNLFKKD (110 aa). A helical membrane pass occupies residues 111–131; the sequence is LMAGLTLASLCIPQSIGYANL. Residues 132 to 133 are Extracellular-facing; it reads AG. A helical membrane pass occupies residues 134–154; the sequence is LDPEYGLYTSVVPPLIYSTMG. Topologically, residues 155–158 are cytoplasmic; sequence TSRE. Residues 159–179 traverse the membrane as a helical segment; the sequence is LAIGPVAVVSLLLSSMVRDLQ. Residues 180 to 190 are Extracellular-facing; the sequence is DPVTDPIAYRK. A helical membrane pass occupies residues 191–211; the sequence is IVFTVTFFAGAFQAIFGLFRL. Residues 212–213 are Cytoplasmic-facing; the sequence is GF. A helical transmembrane segment spans residues 214 to 234; the sequence is LVDFLSHAALVGFMAGAAIVI. Over 235 to 270 the chain is Extracellular; it reads GLQQLKGLFGLTHFTNKTDVVSVLSSVFHSLHHPWQ. The N-linked (GlcNAc...) asparagine glycan is linked to N250. The helical transmembrane segment at 271–291 threads the bilayer; sequence PLNFVIGSSFLIFILLARFIG. Residues 292 to 296 are Cytoplasmic-facing; the sequence is KRNNK. The chain crosses the membrane as a helical span at residues 297–317; it reads LFWIPAMAPLISVVLATLIVY. Residues 318-352 lie on the Extracellular side of the membrane; the sequence is LSNAESRGVKIVKHIKPGFNQLSVNQLQFKSPHLG. Residues 353 to 373 traverse the membrane as a helical segment; the sequence is QIAKIGLISAIIALTEAIAVG. The Cytoplasmic segment spans residues 374 to 389; that stretch reads RSFATIKGYRLDGNKE. The helical transmembrane segment at 390-410 threads the bilayer; that stretch reads MMAMGFMNIAGSLSSCYVATG. At 411-422 the chain is on the extracellular side; it reads SFSRTAVNFSAG. N-linked (GlcNAc...) asparagine glycosylation is present at N418. The chain crosses the membrane as a helical span at residues 423 to 443; the sequence is CETVVSNIVMAITVMISLEVL. The Cytoplasmic portion of the chain corresponds to 444–446; the sequence is TRF. A helical membrane pass occupies residues 447–467; the sequence is LYFTPTAILASIILSALPGLI. Over 468–482 the chain is Extracellular; that stretch reads DVSGALHIWKLDKLD. Residues 483–503 form a helical membrane-spanning segment; that stretch reads FLVLIAAFFGVLFASVEIGLL. Residues 504–677 are Cytoplasmic-facing; that stretch reads LAVGISFARI…RARSTSHELC (174 aa). Positions 540-666 constitute an STAS domain; sequence YPMANKTAGL…MTVGEAVDIY (127 aa).

It belongs to the SLC26A/SulP transporter (TC 2.A.53) family. In terms of tissue distribution, expressed in the phloem in roots and in the phloem of vascular bundles in leaves.

Its subcellular location is the membrane. Functionally, low-affinity H(+)/sulfate cotransporter that may be involved in the distribution of sulfate from vascular bundles to the palisade cells of the leaves. Plays a central role in the regulation of sulfate assimilation. This is Sulfate transporter 2.2 (SULTR2;2) from Arabidopsis thaliana (Mouse-ear cress).